Here is a 171-residue protein sequence, read N- to C-terminus: ATP synthase subunit b (171 aa).

The helical transmembrane segment at 3–23 threads the bilayer; sequence KFLFFIFVFVGISFAGDDTAT.

This sequence belongs to the ATPase B chain family. In terms of assembly, F-type ATPases have 2 components, F(1) - the catalytic core - and F(0) - the membrane proton channel. F(1) has five subunits: alpha(3), beta(3), gamma(1), delta(1), epsilon(1). F(0) has three main subunits: a(1), b(2) and c(10-14). The alpha and beta chains form an alternating ring which encloses part of the gamma chain. F(1) is attached to F(0) by a central stalk formed by the gamma and epsilon chains, while a peripheral stalk is formed by the delta and b chains.

The protein localises to the cell inner membrane. Its function is as follows. F(1)F(0) ATP synthase produces ATP from ADP in the presence of a proton or sodium gradient. F-type ATPases consist of two structural domains, F(1) containing the extramembraneous catalytic core and F(0) containing the membrane proton channel, linked together by a central stalk and a peripheral stalk. During catalysis, ATP synthesis in the catalytic domain of F(1) is coupled via a rotary mechanism of the central stalk subunits to proton translocation. In terms of biological role, component of the F(0) channel, it forms part of the peripheral stalk, linking F(1) to F(0). In Campylobacter hominis (strain ATCC BAA-381 / DSM 21671 / CCUG 45161 / LMG 19568 / NCTC 13146 / CH001A), this protein is ATP synthase subunit b.